A 32-amino-acid chain; its full sequence is Snake venom serine proteinase (32 aa).

Positions 1-32 (VIGGDECDINEHRFLVFLTXASGLACGGTLIN) constitute a Peptidase S1 domain.

Belongs to the peptidase S1 family. Snake venom subfamily. As to quaternary structure, monomer. Post-translationally, contains 6 disulfide bonds. In terms of processing, glycosylated. Expressed by the venom gland.

The protein resides in the secreted. In terms of biological role, cleaves a kininogen analog with the release of kallidin (lysyl-bradykinin). Completely cleaves fibrinogen Aalpha chain, partially cleaves Bbeta chain and has no activity on gamma chain. This is Snake venom serine proteinase from Bitis arietans (African puff adder).